Reading from the N-terminus, the 328-residue chain is Putative potassium channel protein YugO (328 aa).

Transmembrane regions (helical) follow at residues 19–39, 42–62, and 73–93; these read IGVI…ILEP, FTSV…VGYG, and AAGI…FATL. In terms of domain architecture, RCK N-terminal spans 114 to 238; it reads RDHIILIGWN…ERAGANQIIG (125 aa).

It localises to the cell membrane. The chain is Putative potassium channel protein YugO (yugO) from Bacillus subtilis (strain 168).